The following is a 257-amino-acid chain: 1-(5-phosphoribosyl)-5-[(5-phosphoribosylamino)methylideneamino] imidazole-4-carboxamide isomerase (257 aa).

D8 acts as the Proton acceptor in catalysis. Residue D129 is the Proton donor of the active site.

It belongs to the HisA/HisF family.

It is found in the cytoplasm. It carries out the reaction 1-(5-phospho-beta-D-ribosyl)-5-[(5-phospho-beta-D-ribosylamino)methylideneamino]imidazole-4-carboxamide = 5-[(5-phospho-1-deoxy-D-ribulos-1-ylimino)methylamino]-1-(5-phospho-beta-D-ribosyl)imidazole-4-carboxamide. It participates in amino-acid biosynthesis; L-histidine biosynthesis; L-histidine from 5-phospho-alpha-D-ribose 1-diphosphate: step 4/9. The protein is 1-(5-phosphoribosyl)-5-[(5-phosphoribosylamino)methylideneamino] imidazole-4-carboxamide isomerase of Gloeothece citriformis (strain PCC 7424) (Cyanothece sp. (strain PCC 7424)).